We begin with the raw amino-acid sequence, 106 residues long: Cyclin-dependent protein kinase inhibitor SMR15 (106 aa).

In terms of biological role, probable cyclin-dependent protein kinase (CDK) inhibitor that functions as a repressor of mitosis in the endoreduplication cell cycle. In Arabidopsis thaliana (Mouse-ear cress), this protein is Cyclin-dependent protein kinase inhibitor SMR15.